Here is a 427-residue protein sequence, read N- to C-terminus: Putative dipeptidase MCYG_02918 (427 aa).

Positions 1 to 29 (MAPERRSRLSDAGILVSLLALTSLVPVQA) are cleaved as a signal peptide. His55, Asp57, and Glu167 together coordinate Zn(2+). Residues Cys106 and Cys196 are joined by a disulfide bond. His194 provides a ligand contact to substrate. Residues His238 and His259 each coordinate Zn(2+). Substrate-binding residues include Arg270 and Asp330. N-linked (GlcNAc...) asparagine glycosylation occurs at Asn402.

The protein belongs to the metallo-dependent hydrolases superfamily. Peptidase M19 family. Zn(2+) serves as cofactor.

The catalysed reaction is an L-aminoacyl-L-amino acid + H2O = 2 an L-alpha-amino acid. Its function is as follows. Hydrolyzes a wide range of dipeptides. The chain is Putative dipeptidase MCYG_02918 from Arthroderma otae (strain ATCC MYA-4605 / CBS 113480) (Microsporum canis).